We begin with the raw amino-acid sequence, 211 residues long: Probable molybdenum cofactor guanylyltransferase (211 aa).

GTP-binding positions include 21–23, Lys-33, Asp-84, and Asp-116; that span reads LAG. Asp-116 serves as a coordination point for Mg(2+).

The protein belongs to the MobA family. Mg(2+) is required as a cofactor.

Its subcellular location is the cytoplasm. The catalysed reaction is Mo-molybdopterin + GTP + H(+) = Mo-molybdopterin guanine dinucleotide + diphosphate. Its function is as follows. Transfers a GMP moiety from GTP to Mo-molybdopterin (Mo-MPT) cofactor (Moco or molybdenum cofactor) to form Mo-molybdopterin guanine dinucleotide (Mo-MGD) cofactor. The chain is Probable molybdenum cofactor guanylyltransferase from Rhodopirellula baltica (strain DSM 10527 / NCIMB 13988 / SH1).